The primary structure comprises 464 residues: E3 ubiquitin-protein ligase ITT1 (464 aa).

Positions 176-455 are TRIAD supradomain; that stretch reads SNYHCCICME…EAYSGCYGRL (280 aa). 10 residues coordinate Zn(2+): Cys180, Cys183, Cys207, Cys210, Cys290, Cys300, Cys316, Cys319, Cys402, and Cys405. The RING-type 1 zinc-finger motif lies at 180-236; it reads CCICMEMEKGVRMIKLPCENANVEHYLCRGCAKSYFTAMIQENRISSVRCPQCEYKE. Residues 267-338 form an IBR-type zinc finger; the sequence is DTELCERYEK…HAWHGYNNKC (72 aa). The RING-type 2; atypical zinc finger occupies 402-431; sequence CPKCKVVVERSEGCNKMKCEVCGTLFCFIC. Residue Cys415 is part of the active site. Zn(2+) is bound by residues Cys420, Cys423, Cys428, Cys431, His443, and Cys451.

This sequence belongs to the RBR family. RNF14 subfamily. As to quaternary structure, interacts with translation release factors eRF1 (SUP45) and eRF3 (SUP35) in vitro.

It carries out the reaction [E2 ubiquitin-conjugating enzyme]-S-ubiquitinyl-L-cysteine + [acceptor protein]-L-lysine = [E2 ubiquitin-conjugating enzyme]-L-cysteine + [acceptor protein]-N(6)-ubiquitinyl-L-lysine.. The protein operates within protein modification; protein ubiquitination. E3 ubiquitin-protein ligase involved in translation quality control. Involved in the rescue of stalled ribosomes by promoting ubiquitination and degradation of proteins on stalled ribosomes. Specifically required to resolve RNA-protein cross-links caused by reactive aldehydes, which trigger translation stress by stalling ribosomes: acts by catalying 'Lys-6'-linked ubiquitination of RNA-protein cross-links, leading to their degradation. Interacts with the translation termination factors eRF1 (SUP45) and eRF3 (SUP35); overexpression decreases the efficiency of translation termination. The chain is E3 ubiquitin-protein ligase ITT1 from Saccharomyces cerevisiae (strain ATCC 204508 / S288c) (Baker's yeast).